A 194-amino-acid polypeptide reads, in one-letter code: FMN-dependent NADH:quinone oxidoreductase (194 aa).

FMN is bound by residues Ser-9, 15 to 17 (SIS), and 85 to 88 (MYNF).

Belongs to the azoreductase type 1 family. As to quaternary structure, homodimer. The cofactor is FMN.

It catalyses the reaction 2 a quinone + NADH + H(+) = 2 a 1,4-benzosemiquinone + NAD(+). The catalysed reaction is N,N-dimethyl-1,4-phenylenediamine + anthranilate + 2 NAD(+) = 2-(4-dimethylaminophenyl)diazenylbenzoate + 2 NADH + 2 H(+). Quinone reductase that provides resistance to thiol-specific stress caused by electrophilic quinones. Functionally, also exhibits azoreductase activity. Catalyzes the reductive cleavage of the azo bond in aromatic azo compounds to the corresponding amines. In Xanthomonas oryzae pv. oryzae (strain KACC10331 / KXO85), this protein is FMN-dependent NADH:quinone oxidoreductase.